We begin with the raw amino-acid sequence, 533 residues long: DnaJ homolog subfamily C member 21 (533 aa).

In terms of domain architecture, J spans cysteine 3–glutamate 70. Disordered regions lie at residues glutamine 278–tyrosine 311, lysine 327–alanine 473, and lysine 503–arginine 533. 2 positions are modified to phosphoserine: serine 283 and serine 302. The span at glutamine 291 to serine 302 shows a compositional bias: basic and acidic residues. The C2H2-type 1 zinc-finger motif lies at tyrosine 315–arginine 339. Polar residues predominate over residues serine 357–asparagine 369. Serine 370 is modified (phosphoserine). Over residues lysine 381–lysine 392 the composition is skewed to basic residues. Residues proline 393–glutamate 403 show a composition bias toward polar residues. Residues serine 455 to aspartate 464 are compositionally biased toward basic residues. The C2H2-type 2 zinc-finger motif lies at serine 484–alanine 508. Serine 512 bears the Phosphoserine mark. A compositionally biased stretch (low complexity) spans serine 512–serine 523. Residues arginine 524–arginine 533 show a composition bias toward basic residues.

Interacts with HSPA8, PA2G4 and ZNF622.

It localises to the cytoplasm. Its subcellular location is the nucleus. The protein resides in the nucleolus. Its function is as follows. May act as a co-chaperone for HSP70. May play a role in ribosomal RNA (rRNA) biogenesis, possibly in the maturation of the 60S subunit. Binds the precursor 45S rRNA. The protein is DnaJ homolog subfamily C member 21 (DNAJC21) of Bos taurus (Bovine).